The primary structure comprises 1038 residues: Fibronectin-binding protein A (1038 aa).

The N-terminal stretch at 1–36 (MKNNLRYGIRKHKLGAASVFLGTMIVVGMGQDKEAA) is a signal peptide. Residues 7–18 (YGIRKHKLGAAS) carry the YSIRK-G/S signaling motif motif. The segment at 37-193 (ASEQKTTTVE…VSEVKGTDVT (157 aa)) is disordered. The segment at 37–507 (ASEQKTTTVE…SNKADGNGKN (471 aa)) is ligand-binding A region. Over residues 39-92 (EQKTTTVEENGNSATDNKTSETQTTATNVNHIEETQSYNATVTEQPSNATQVTT) the composition is skewed to polar residues. Basic and acidic residues predominate over residues 112-121 (TVKEEEKPQV). Polar residues predominate over residues 122–164 (KETTQPQDNSGNQRQVDLTPKKVTQNQGTETQVEVAQPRTASE). Basic and acidic residues predominate over residues 174-189 (DVAEAKEASDVSEVKG). The tract at residues 189–507 (GTDVTSKVTV…SNKADGNGKN (319 aa)) is fibrinogen/elastin/tropoelastin-binding. Positions 508–868 (GQIIQDNDFE…EGQQTIEEDT (361 aa)) are fibronectin-binding. Residues 541–570 (ENQDNTPLDIDYHTAIDGEGGYVDGYIETI) form a B-1 repeat. The interval 541–600 (ENQDNTPLDIDYHTAIDGEGGYVDGYIETIEETDSSAIDIDYHTAVDSEVGHVGGYTESS) is 2 X approximate tandem repeats. Residues 571-600 (EETDSSAIDIDYHTAVDSEVGHVGGYTESS) form a B-2 repeat. 3 disordered regions span residues 736–804 (LGYE…GGNI), 825–976 (IEED…GKVV), and 989–1015 (VAPT…NKGM). One copy of the D-1 repeat lies at 741-778 (GQNSGNQSFEEDTEEDKPKYEQGGNIVDIDFDSVPQIH). Positions 741-898 (GQNSGNQSFE…TPEVPSEPET (158 aa)) are 4 X approximate tandem repeats. The stretch at 779–816 (GQNKGDQSFEEDTEKDKPKYEHGGNIIDIDFDSVPQIH) is one D-2 repeat. Residues 817 to 855 (GFNKHNEIIEEDTNKDKPNYQFGGHNSVDFEEDTLPKVS) form a D-3 repeat. Residues 825 to 834 (IEEDTNKDKP) are compositionally biased toward basic and acidic residues. The D-4 repeat unit spans residues 856–898 (GQNEGQQTIEEDTTPPTPPTPEVPSEPETPMPPTPEVPSEPET). A compositionally biased stretch (pro residues) spans 870–958 (PPTPPTPEVP…PAEPGKPVPP (89 aa)). WR repeat units follow at residues 899-912 (PTPP…EPET), 913-926 (PTPP…EPET), 927-940 (PTPP…EPET), 941-954 (PTPP…EPGK), and 955-968 (PVPP…KPSK). Residues 899-968 (PTPPTPEVPS…AKEEPKKPSK (70 aa)) are 5 X tandem repeats, Pro-rich (WR). The short motif at 1002–1006 (LPETG) is the LPXTG sorting signal element. T1005 bears the Pentaglycyl murein peptidoglycan amidated threonine mark. A propeptide spans 1006–1038 (GGEESTNKGMLFGGLFSILGLALLRRNKKNNKA) (removed by sortase).

The protein localises to the secreted. It is found in the cell wall. Its function is as follows. Promotes bacterial attachment to multiple substrates, such as fibronectin (Fn), fibrinogen (Fg), elastin peptides and tropoelastin. This confers to S.aureus the ability to invade endothelial cells. Promotes adherence to and aggregation of activated platelets. The chain is Fibronectin-binding protein A (fnbA) from Staphylococcus aureus (strain Mu50 / ATCC 700699).